A 396-amino-acid chain; its full sequence is Putative O-antigen transporter (396 aa).

11 helical membrane-spanning segments follow: residues 5–25, 32–52, 82–102, 107–127, 137–157, 163–183, 211–231, 286–306, 322–342, 348–368, and 372–392; these read ILLLFLVHGANYLFPFIVLPY, IETFADVAKIQAAVMLLSLIV, IVKLLLATICLALGCVHLMYV, LIYPFIISSIYLYGSALFATW, AVVIATTIAKLTGVILTFILV, IVAALFTQNIGMFISGIISIY, FFLSLAATSVYTYFNVILLSF, AIFGVCISAGLVFLGPMLTTI, MFLLPATISISTILSQWMLIP, ILSRIYILGAIVHLLYAFPLV, and GAWGMVISILFTEVLIVLFML.

Belongs to the polysaccharide synthase family.

Its subcellular location is the cell inner membrane. It participates in bacterial outer membrane biogenesis; LPS O-antigen biosynthesis. May be involved in the translocation process of the nascent O-polysaccharide molecules and/or its ligation to lipid A core units. This Shigella dysenteriae protein is Putative O-antigen transporter (rfbX).